The following is a 113-amino-acid chain: U11-theraphotoxin-Hhn1m (113 aa).

An N-terminal signal peptide occupies residues 1-21 (MNTVRGTFLLVFGLAASLGQA). A propeptide spanning residues 22–74 (DKNENRREMQKKTEQGKSYLNFAENLLLQKLEELEAKLLEKHSKKSKNSRQKR) is cleaved from the precursor. 3 disulfides stabilise this stretch: Cys75/Cys90, Cys82/Cys95, and Cys89/Cys110.

The protein belongs to the neurotoxin 14 (magi-1) family. 01 (HNTX-16) subfamily. Expressed by the venom gland.

The protein localises to the secreted. Functionally, probable ion channel inhibitor. The polypeptide is U11-theraphotoxin-Hhn1m (Cyriopagopus hainanus (Chinese bird spider)).